We begin with the raw amino-acid sequence, 150 residues long: Large ribosomal subunit protein bL9 (150 aa).

Belongs to the bacterial ribosomal protein bL9 family.

Its function is as follows. Binds to the 23S rRNA. The polypeptide is Large ribosomal subunit protein bL9 (Burkholderia mallei (strain NCTC 10247)).